A 138-amino-acid polypeptide reads, in one-letter code: Cytochrome b5 (138 aa).

Positions 14–90 (GRYYRLEEVQ…SETFIIGELH (77 aa)) constitute a Cytochrome b5 heme-binding domain. The heme site is built by H49 and H73. Residues 114–136 (SWSNWVIPAIAAIIVALMYRSYM) form a helical membrane-spanning segment.

Belongs to the cytochrome b5 family.

The protein resides in the endoplasmic reticulum membrane. The protein localises to the microsome membrane. Its function is as follows. Cytochrome b5 is a membrane-bound hemoprotein functioning as an electron carrier for several membrane-bound oxygenases. The sequence is that of Cytochrome b5 (CYB5A) from Gallus gallus (Chicken).